The sequence spans 341 residues: Anthranilate phosphoribosyltransferase (341 aa).

5-phospho-alpha-D-ribose 1-diphosphate is bound by residues Gly81, 84–85, Thr89, 91–94, 109–117, and Ser121; these read GD, NIST, and KHGSRSVSG. Gly81 is a binding site for anthranilate. Ser93 provides a ligand contact to Mg(2+). Arg167 contributes to the anthranilate binding site. Mg(2+) contacts are provided by Asp226 and Glu227.

This sequence belongs to the anthranilate phosphoribosyltransferase family. Homodimer. Requires Mg(2+) as cofactor.

The catalysed reaction is N-(5-phospho-beta-D-ribosyl)anthranilate + diphosphate = 5-phospho-alpha-D-ribose 1-diphosphate + anthranilate. It functions in the pathway amino-acid biosynthesis; L-tryptophan biosynthesis; L-tryptophan from chorismate: step 2/5. Functionally, catalyzes the transfer of the phosphoribosyl group of 5-phosphorylribose-1-pyrophosphate (PRPP) to anthranilate to yield N-(5'-phosphoribosyl)-anthranilate (PRA). In Methylococcus capsulatus (strain ATCC 33009 / NCIMB 11132 / Bath), this protein is Anthranilate phosphoribosyltransferase.